The sequence spans 2271 residues: Serine-rich adhesin for platelets (2271 aa).

The N-terminal stretch at 1–89 is a signal peptide; it reads MSKRQKAFHD…VNMLHDQQAF (89 aa). The segment at 90–230 is serine-rich repeat region 1, SRR1; that stretch reads AASDAPLTSE…KTSTTSTSTA (141 aa). Residues 100–111 are compositionally biased toward polar residues; the sequence is LNTQSETVGNQN. A disordered region spans residues 100-229; sequence LNTQSETVGN…NKTSTTSTST (130 aa). The span at 112-128 shows a compositional bias: low complexity; that stretch reads STTIEASTSTADSTSVT. Over residues 129-140 the composition is skewed to polar residues; that stretch reads KNSSSVQTSNSD. Residues 150-229 are compositionally biased toward low complexity; it reads VTSTTNSTSN…NKTSTTSTST (80 aa). Residues 231–751 are non-repeat region (NRR); sequence PVKLRTFSRL…TTFKYEVTRN (521 aa). The tract at residues 245–491 is L-lectin module; that stretch reads FASAATTTAV…QQVQFGTFEY (247 aa). Residues D365, Y367, N369, and D382 each coordinate Ca(2+). Positions 492-571 are beta-grasp module; that stretch reads TESAVTQVRY…NAGQSVTYYF (80 aa). Positions 572 to 659 are cadherin-like module-1; it reads TDVKAPTVTV…KSTTTFTINV (88 aa). The Ca(2+) site is built by D573, K575, D601, N602, D645, D661, T663, D690, N691, and D734. Residues 660–751 are cadherin-like module-2; the sequence is VDTTAPTVTP…TTFKYEVTRN (92 aa). Disordered stretches follow at residues 751-791 and 806-2242; these read NSMS…VVST and SVSA…NGLL. Composition is skewed to low complexity over residues 752–791, 806–1392, and 1402–2214; these read SMSDSVSTSGSTQQSQSVSTSKADSQSASTSTSGSIVVST, SVSA…LSLS, and SNSA…ATSE. Positions 752–2232 are serine-rich repeat region 2, SRR2; it reads SMSDSVSTSG…AQSEKRLPDT (1481 aa). The LPXTG sorting signal motif lies at 2229–2233; the sequence is LPDTG. T2232 bears the Pentaglycyl murein peptidoglycan amidated threonine mark. The propeptide at 2233–2271 is removed by sortase; the sequence is GDSIKQNGLLGGVMTLLVGLGLMKRKKKKDENDQDDSQA.

It belongs to the serine-rich repeat protein (SRRP) family. Post-translationally, proteolytically cleaved by a metalloprotease. Glycosylated. It is probable that most of the Ser residues in SSR1 and SSR2 are O-GlcNAcylated. Sequential glycosylation by sugar transferases are able to generate complex sugar polymorphisms.

The protein resides in the secreted. The protein localises to the cell wall. Mediates binding to human platelets, possibly through a receptor-ligand interaction. Probably associated with virulence in endovascular infection. Plays a positive role in biofilm formation, possibly by self-association via the non-repeat region (NRR or binding region, BR). Binds to and plays a role in human lung epithelial cell invasion via the L-lectin module of its NRR domain; N-acetylneuraminic acid (Neu5Ac) inhibits binding. Treatment of host cells with neuraminidase decreases adherence of S.aureus cells, suggesting SraP recognizes a host terminal Neu5Ac moiety as a receptor. The protein is Serine-rich adhesin for platelets of Staphylococcus aureus (strain NCTC 8325 / PS 47).